Consider the following 1225-residue polypeptide: Hybrid signal transduction histidine kinase C (1225 aa).

A helical membrane pass occupies residues 8-28; it reads GFLLSTLFFTIISIILFYFFI. Over residues 313–356 the composition is skewed to low complexity; it reads LSPRSLSSSSSSSPSSSNNNGNTNNSGSLSPRSSNSNGSAVSPR. A disordered region spans residues 313–407; the sequence is LSPRSLSSSS…SNGTISSPRT (95 aa). The segment covering 357-368 has biased composition (polar residues); the sequence is NVSSNSMSPRGQ. A compositionally biased stretch (low complexity) spans 370–388; the sequence is SDRSISSPRGSSSSSSSSS. The segment covering 389–407 has biased composition (polar residues); sequence NELAISPRNSNGTISSPRT. In terms of domain architecture, Histidine kinase spans 426 to 653; it reads HLSHELRTPI…TFHFVIPLET (228 aa). At H429 the chain carries Phosphohistidine; by autocatalysis. A Response regulatory 1 domain is found at 669-784; that stretch reads SVLVVDKNPY…HLVACLLASM (116 aa). Position 721 is a 4-aspartylphosphate (D721). Disordered stretches follow at residues 809–832, 941–974, and 1021–1076; these read NNINNNSNNNNNNMQTHNSNSVYG, DDDSNNYCNTTGTMDSIDEINKNNYSDSESDELN, and YLSP…PRAP. Residues 945–954 are compositionally biased toward polar residues; sequence NNYCNTTGTM. A compositionally biased stretch (low complexity) spans 1023-1037; that stretch reads SPRSMNNNNGNNDNG. The segment covering 1058–1072 has biased composition (polar residues); sequence TSDTSSLAQSPNSLS. Residues 1078–1200 form the Response regulatory 2 domain; sequence KIMILDDNPV…CLELILRKWE (123 aa). The residue at position 1127 (D1127) is a 4-aspartylphosphate.

It localises to the membrane. The catalysed reaction is ATP + protein L-histidine = ADP + protein N-phospho-L-histidine.. Acts in a signal transduction pathway that regulates the slug versus culmination choice. Believed to be the first component of a phosphorelay that couples the sensing of ammonia to the modulation of PKA activity and hence activates culmination and spore germination. Ammonium transporters amtA and amtC are thought to respectively activate and inhibit dhkC phosphorelay. This protein probably undergoes an ATP-dependent autophosphorylation at conserved His residue in the kinase core, and a phosphoryl group is then transferred to a conserved aspartate residue in the receiver domain. In Dictyostelium discoideum (Social amoeba), this protein is Hybrid signal transduction histidine kinase C (dhkC).